Consider the following 430-residue polypeptide: MPRKFLGNKIEKNVDAVRPSSLTLTADDLKYIPPIPQDFEDEDDKVLRTSNGGNRLSKRFGGTLKLKKRLESVPELFLHDFKKRPRSQLEVIREKKFTDMQVPKGPVCPQSTILPLRERKKVKSLPIQRKSLRRPTLSKPAVVQSLGHKTHSDHIIDKVFVSRPAPIVMPVKALTPINPVSLMQTQTQDCCRKNKYGKSGSEILFDEILSAYENVSTSDSTALNSEIDRIIDICASKQIAKKNEAFQVPYVVCPDDTETLFSSTTPKLKPVNSNTLNDVISSPEYTTSGCSTYSDQSNSDEELSEVESIVWNTNKRTMRSSIVSESTSEEGYCTAAETLPSTVSVEDLDIHNKLPKVAQTSSCNTLLNKLSIRKLKKVILDPPKIMHVMTFDDDSDDGDDNDDEDRALNILQKKIDCIEIASCSSSIYSE.

Phosphoserine is present on S395.

The protein resides in the bud neck. In terms of biological role, may be involved in the establishment of the daughter fate. This is Protein DSE3 (DSE3) from Saccharomyces cerevisiae (strain ATCC 204508 / S288c) (Baker's yeast).